The chain runs to 228 residues: Probable septum site-determining protein MinC (228 aa).

The protein belongs to the MinC family. As to quaternary structure, interacts with MinD and FtsZ.

In terms of biological role, cell division inhibitor that blocks the formation of polar Z ring septums. Rapidly oscillates between the poles of the cell to destabilize FtsZ filaments that have formed before they mature into polar Z rings. Prevents FtsZ polymerization. The polypeptide is Probable septum site-determining protein MinC (Pectobacterium carotovorum subsp. carotovorum (strain PC1)).